The sequence spans 287 residues: 2-dehydro-3-deoxyphosphooctonate aldolase (287 aa).

It belongs to the KdsA family.

It localises to the cytoplasm. The enzyme catalyses D-arabinose 5-phosphate + phosphoenolpyruvate + H2O = 3-deoxy-alpha-D-manno-2-octulosonate-8-phosphate + phosphate. It functions in the pathway carbohydrate biosynthesis; 3-deoxy-D-manno-octulosonate biosynthesis; 3-deoxy-D-manno-octulosonate from D-ribulose 5-phosphate: step 2/3. The protein operates within bacterial outer membrane biogenesis; lipopolysaccharide biosynthesis. The protein is 2-dehydro-3-deoxyphosphooctonate aldolase of Rhodopseudomonas palustris (strain ATCC BAA-98 / CGA009).